Consider the following 324-residue polypeptide: Tetrachlorobenzoquinone reductase (324 aa).

The FAD-binding FR-type domain maps to 5 to 107; the sequence is VSTIDMTVTQ…VPPANNFALV (103 aa). One can recognise a 2Fe-2S ferredoxin-type domain in the interval 238–324; that stretch reads FTVVLARRSG…SKSPRLVLDI (87 aa). Residues cysteine 273, cysteine 278, cysteine 281, and cysteine 311 each contribute to the [2Fe-2S] cluster site.

The protein belongs to the PDR/VanB family. In terms of assembly, homotrimer. It depends on FMN as a cofactor. [2Fe-2S] cluster is required as a cofactor.

It catalyses the reaction 2,3,5,6-tetrachlorohydroquinone + NAD(+) + H(+) = 2,3,5,6-tetrachloro-1,4-benzoquinone + NADH. It functions in the pathway xenobiotic degradation; pentachlorophenol degradation. Its activity is regulated as follows. In vitro, activated by tetrachlorohydroquinone (TCHQ) at low concentrations and inhibited at high concentrations (above 200 uM). However, PcpD would only be stimulated by tetrachlorohydroquinone (TCHQ) under in vivo conditions due to the toxicity of tetrachlorohydroquinone (TCHQ). Competitively inhibited by pentachlorophenol (PCP) in a concentration-dependent manner. PcpD is regulated by tetrachlorohydroquinone (TCHQ) and pentachlorophenol (PCP) using a mechanism, which maintains tetrachlorobenzoquinone at a level that would neither significantly decrease the biodegradation of pentachlorophenol (PCP) nor cause cytotoxicity in cells. Functionally, involved in the degradation of the xenobiocide pentachlorophenol (PCP). Catalyzes the reduction of tetrachlorobenzoquinone (TCBQ) to yield tetrachlorohydroquinone (TCHQ). Also able to reduce 2,6-dichloroindophenol (DCIP). This is Tetrachlorobenzoquinone reductase from Sphingobium chlorophenolicum.